The following is a 189-amino-acid chain: Interferon alpha-G (189 aa).

Residues 1 to 23 (MAPAWSLLLALLLLSCNAICSLG) form the signal peptide. 2 disulfides stabilise this stretch: cysteine 24–cysteine 122 and cysteine 52–cysteine 162.

It belongs to the alpha/beta interferon family.

Its subcellular location is the secreted. Its function is as follows. Produced by macrophages, IFN-alpha have antiviral activities. Interferon stimulates the production of two enzymes: a protein kinase and an oligoadenylate synthetase. In Bos taurus (Bovine), this protein is Interferon alpha-G (IFNAG).